The following is a 381-amino-acid chain: RING-H2 finger protein ATL1 (381 aa).

Residues 1–31 (MDLTDRRNPFNNLVFPPPPPPPSTTFTSPIF) form a disordered region. A helical membrane pass occupies residues 46-66 (IAVIGILATAFLLVSYYIFVI). Residues 134–176 (CSVCLNEFQEDEKLRIIPNCCHVFHIDCIDIWLQGNANCPLCR) form an RING-type; atypical zinc finger. Disordered stretches follow at residues 249–269 (TSNE…PIKF) and 334–354 (RQIP…GNSR). Polar residues predominate over residues 250-261 (SNEVSTGNSPKS).

The protein belongs to the RING-type zinc finger family. ATL subfamily.

It localises to the membrane. The enzyme catalyses S-ubiquitinyl-[E2 ubiquitin-conjugating enzyme]-L-cysteine + [acceptor protein]-L-lysine = [E2 ubiquitin-conjugating enzyme]-L-cysteine + N(6)-ubiquitinyl-[acceptor protein]-L-lysine.. Its pathway is protein modification; protein ubiquitination. The protein is RING-H2 finger protein ATL1 (ATL1) of Arabidopsis thaliana (Mouse-ear cress).